The chain runs to 108 residues: Small ribosomal subunit protein uS17 (108 aa).

Belongs to the universal ribosomal protein uS17 family. In terms of assembly, part of the 30S ribosomal subunit.

Functionally, one of the primary rRNA binding proteins, it binds specifically to the 5'-end of 16S ribosomal RNA. This chain is Small ribosomal subunit protein uS17, found in Methanoregula boonei (strain DSM 21154 / JCM 14090 / 6A8).